The sequence spans 113 residues: Ribulose bisphosphate carboxylase small subunit (113 aa).

Belongs to the RuBisCO small chain family. In terms of assembly, heterohexadecamer of 8 large and 8 small subunits. Forms a CsoS2-CsoS1-RuBisCO complex.

The protein localises to the carboxysome. Its function is as follows. RuBisCO catalyzes two reactions: the carboxylation of D-ribulose 1,5-bisphosphate, the primary event in carbon dioxide fixation, as well as the oxidative fragmentation of the pentose substrate in the photorespiration process. Both reactions occur simultaneously and in competition at the same active site. Although the small subunit is not catalytic it is essential for maximal activity. There are estimated to be 152 RuBisCO holoenzymes per carboxysome. This Prochlorococcus marinus subsp. pastoris (strain CCMP1986 / NIES-2087 / MED4) protein is Ribulose bisphosphate carboxylase small subunit.